The primary structure comprises 68 residues: MSRLGVLLTICLLLFPLTAVPLDGDQPADRPAERLQDDISSEHHPHFDSGRECCGSFACRFGCVPCCV.

Positions 1 to 19 (MSRLGVLLTICLLLFPLTA) are cleaved as a signal peptide. Residues 20–51 (VPLDGDQPADRPAERLQDDISSEHHPHFDSGR) constitute a propeptide that is removed on maturation. The segment at 22 to 46 (LDGDQPADRPAERLQDDISSEHHPH) is disordered. The span at 27-46 (PADRPAERLQDDISSEHHPH) shows a compositional bias: basic and acidic residues. Disulfide bonds link C53/C67, C54/C63, and C59/C66. P65 bears the 4-hydroxyproline mark.

Belongs to the conotoxin M superfamily. Expressed by the venom duct.

The protein localises to the secreted. The polypeptide is Conotoxin Mr3.3 (Conus marmoreus (Marble cone)).